We begin with the raw amino-acid sequence, 242 residues long: HTH-type transcriptional regulator GadW (242 aa).

In terms of domain architecture, HTH araC/xylS-type spans 139–236; it reads GKVERLISFD…GVTPHQFSQH (98 aa). 2 DNA-binding regions (H-T-H motif) span residues 156-177 and 203-226; these read RDIAERMYTSESLIKKKLQDEN and LHTIAEKCGYSSTSYFINTFRQYY.

In terms of assembly, homodimer.

Depending on the conditions (growth phase and medium), acts as a positive or negative regulator of gadA and gadBC. Repression occurs directly or via the repression of the expression of gadX. Activation occurs directly by the binding of GadW to the gadA and gadBC promoters. The sequence is that of HTH-type transcriptional regulator GadW (gadW) from Escherichia coli O6:H1 (strain CFT073 / ATCC 700928 / UPEC).